A 309-amino-acid polypeptide reads, in one-letter code: Ribonuclease Z (309 aa).

Residues His-64, His-66, Asp-68, His-69, His-141, Asp-209, and His-267 each coordinate Zn(2+). Residue Asp-68 is the Proton acceptor of the active site.

This sequence belongs to the RNase Z family. In terms of assembly, homodimer. The cofactor is Zn(2+).

The catalysed reaction is Endonucleolytic cleavage of RNA, removing extra 3' nucleotides from tRNA precursor, generating 3' termini of tRNAs. A 3'-hydroxy group is left at the tRNA terminus and a 5'-phosphoryl group is left at the trailer molecule.. Functionally, zinc phosphodiesterase, which displays some tRNA 3'-processing endonuclease activity. Probably involved in tRNA maturation, by removing a 3'-trailer from precursor tRNA. In Picrophilus torridus (strain ATCC 700027 / DSM 9790 / JCM 10055 / NBRC 100828 / KAW 2/3), this protein is Ribonuclease Z.